The following is a 397-amino-acid chain: Lysophospholipid transporter LplT (397 aa).

At 1 to 17 (MSESVHTNTSLWSKGMK) the chain is on the periplasmic side. Residues 18 to 38 (AVIVAQFLSAFGDNALLFATL) form a helical membrane-spanning segment. The Cytoplasmic portion of the chain corresponds to 39–52 (ALLKAQFYPEWSQP). The helical transmembrane segment at 53–73 (ILQMVFVGAYILFAPFVGQVA) threads the bilayer. The Periplasmic portion of the chain corresponds to 74–90 (DSFAKGRVMMFANGLKL). Residues 91–111 (LGAASICFGINPFLGYTLVGV) traverse the membrane as a helical segment. At 112-144 (GAAAYSPAKYGILGELTTGSKLVKANGLMEAST) the chain is on the cytoplasmic side. The helical transmembrane segment at 145-165 (IAAILLGSVAGGVLADWHVLV) threads the bilayer. Position 166 (Ala-166) is a topological domain, periplasmic. A helical membrane pass occupies residues 167 to 187 (LAACALAYGGAVVANIYIPKL). The Cytoplasmic portion of the chain corresponds to 188–226 (AAARPGQSWNLINMTRSFLNACTSLWCNGETRFSLVGTS). Residues 227–247 (LFWGAGVTLRFLLVLWVPVAL) traverse the membrane as a helical segment. Over 248–256 (GITDNATPT) the chain is Periplasmic. The helical transmembrane segment at 257–277 (YLNAMVAIGIVVGAGAAAKLV) threads the bilayer. The Cytoplasmic segment spans residues 278-280 (TLE). A helical transmembrane segment spans residues 281–301 (TVSRCMPAGILIGVVVLIFSL). The Periplasmic segment spans residues 302-304 (QHE). The helical transmembrane segment at 305 to 325 (LLPAYALLMLIGVLGGFFVVP) threads the bilayer. The Cytoplasmic portion of the chain corresponds to 326-343 (LNALLQERGKKSVGAGNA). Residues 344 to 364 (IAVQNLGENSAMLLMLGIYSL) traverse the membrane as a helical segment. The Periplasmic segment spans residues 365-366 (AV). Residues 367–387 (MVGIPVVPIGIGFGALFALAI) form a helical membrane-spanning segment. Topologically, residues 388-397 (TALWIWQRRH) are cytoplasmic.

Belongs to the major facilitator superfamily. LplT (TC 2.A.1.42) family.

It localises to the cell inner membrane. In terms of biological role, catalyzes the facilitated diffusion of 2-acyl-glycero-3-phosphoethanolamine (2-acyl-GPE) into the cell. The polypeptide is Lysophospholipid transporter LplT (Shigella dysenteriae serotype 1 (strain Sd197)).